A 608-amino-acid polypeptide reads, in one-letter code: MDDDKGTDTTDAKEGCSGWFMLEAACSDDSDLDNSLEKLFEDGTESDVSDLINDDDTAAQGNSRELLCQQQSEECEQQIQYLKRKYFSPKAVQQLSPRLQSMNISPGHKSKRRLFVEHDSGLECSLNEAEDLTEEVEVPASAPAPAAQGGVGSGHYTSLLRCNNVKAVLLGKFKDAFGVSYNELTRQFRSNKTCCKHWVLAIYAAKDELIDASKQLLQQHCTYLWLQTFSPMSLYLCCFNVGKSRETVMRLLSSMLQVNENHILSEPPKIRSMIAALFWYKGSMNPNVYAFGEYPEWIMTQTMIHHQTADSVQFDLSEMIQWAYDQDYVDECTIAYQYARLADSNSNARAFLAHNSQAKYVRECAQMVRYYKRGEMRDMSISAWIHHCISKIEGDGHWQDIVKFLRYQGLNFIVFLDKFRTFLKNFPKKNCLLICGPPDTGKSMFSMSLMKALRGQVVSFANSKSHFWLQPLADAKLALLDDATEVCWQYIDAFLRNGLDGNMVSLDMKHRAPCQMKFPPLIITSNISLKKEKKFPYLHSRIYEFEFPNKFPFDANDTPLFKLTDQSWASFFKRLWTQLELSDQEEEGENGETQRTFQCTTREVNGLI.

The Nuclear localization signal motif lies at 83-85; the sequence is KRK. A phosphoserine; by host mark is found at Ser88 and Ser96. Residues 148–311 form a DNA-binding region region; it reads QGGVGSGHYT…TMIHHQTADS (164 aa). In terms of domain architecture, SF3 helicase spans 410-560; the sequence is LNFIVFLDKF…FPFDANDTPL (151 aa). 436–443 is a binding site for ATP; sequence GPPDTGKS. A Glycyl lysine isopeptide (Lys-Gly) (interchain with G-Cter in SUMO) cross-link involves residue Lys517.

This sequence belongs to the papillomaviridae E1 protein family. Can form hexamers. Interacts with E2 protein; this interaction increases E1 DNA binding specificity. Interacts with host DNA polymerase subunit POLA2. Interacts with host single stranded DNA-binding protein RPA1. Interacts with host TOP1; this interaction stimulates the enzymatic activity of TOP1. Post-translationally, phosphorylated. In terms of processing, sumoylated.

It localises to the host nucleus. It catalyses the reaction Couples ATP hydrolysis with the unwinding of duplex DNA by translocating in the 3'-5' direction.. The enzyme catalyses ATP + H2O = ADP + phosphate + H(+). In terms of biological role, ATP-dependent DNA 3'-5' helicase required for initiation of viral DNA replication. It forms a complex with the viral E2 protein. The E1-E2 complex binds to the replication origin which contains binding sites for both proteins. During the initial step, a dimer of E1 interacts with a dimer of protein E2 leading to a complex that binds the viral origin of replication with high specificity. Then, a second dimer of E1 displaces the E2 dimer in an ATP-dependent manner to form the E1 tetramer. Following this, two E1 monomers are added to each half of the site, which results in the formation of two E1 trimers on the viral ori. Subsequently, two hexamers will be created. The double hexamer acts as a bi-directional helicase machinery and unwinds the viral DNA and then recruits the host DNA polymerase to start replication. This chain is Replication protein E1, found in Homo sapiens (Human).